An 872-amino-acid chain; its full sequence is Tetratricopeptide repeat protein 16 (872 aa).

The interval 1 to 20 (MTDSDEDALKVDQGPSQDIP) is disordered. 8 TPR repeats span residues 61–94 (VREY…DPQL), 96–128 (DFYA…QQDN), 136–169 (TFVL…QPEK), 251–284 (AQQA…NPLD), 285–318 (PSFF…VTED), 331–364 (LLTY…EQQE), 365–398 (KGLY…SPQD), and 406–439 (GLLQ…NPQK). Disordered stretches follow at residues 557–640 (ATPE…ETET) and 653–872 (TAMT…YEVL). Over residues 577–590 (KEEEEKEEEEQKEE) the composition is skewed to acidic residues. Residues 591-604 (EEQKKEEKKEEKKP) are compositionally biased toward basic and acidic residues. 4 stretches are compositionally biased toward polar residues: residues 610–640 (KVAS…ETET), 653–675 (TAMT…NNRE), 689–709 (GQRQ…NFSK), and 721–754 (KTKA…SQGP). Residues 762 to 783 (KTTRSPRQRPRKVKAARGRSWR) are compositionally biased toward basic residues. Polar residues-rich tracts occupy residues 799–827 (RSST…GQRT) and 839–861 (GMSS…SKTE).

The polypeptide is Tetratricopeptide repeat protein 16 (TTC16) (Macaca fascicularis (Crab-eating macaque)).